Here is a 47-residue protein sequence, read N- to C-terminus: Boigatoxin-A (47 aa).

Residue glutamine 1 is modified to Pyrrolidone carboxylic acid. 2 disulfides stabilise this stretch: cysteine 10-cysteine 34 and cysteine 13-cysteine 21.

In terms of assembly, monomer. As to expression, expressed by the venom gland.

It is found in the secreted. In terms of biological role, this toxin may inhibit nicotinic acetylcholine receptor (nAChR). It has poorly reversible postsynaptic blocking activity in a chick muscle preparation and readily reversible inhibitory activity at a presynaptic site in the rat vas deferens prostatic segment most likely to prevent the release of neurotransmitters. This Boiga dendrophila (Mangrove snake) protein is Boigatoxin-A.